Consider the following 423-residue polypeptide: Glutamyl-tRNA(Gln) amidotransferase subunit A (423 aa).

The segment at 1-20 (MSHNAFITEETIEPTDDGPL) is disordered. Residues 10–19 (ETIEPTDDGP) are compositionally biased toward acidic residues. Active-site charge relay system residues include Lys-28 and Ser-103. The disordered stretch occupies residues 75 to 108 (EFGMGTTTETSAFGPTENPAAEGRVPGGSSGGSA). The Acyl-ester intermediate role is filled by Ser-127. A disordered region spans residues 183–206 (DERDGTTREPPAGQPTYADAADGD).

It belongs to the amidase family. GatA subfamily. Heterotrimer of A, B and C subunits.

It carries out the reaction L-glutamyl-tRNA(Gln) + L-glutamine + ATP + H2O = L-glutaminyl-tRNA(Gln) + L-glutamate + ADP + phosphate + H(+). In terms of biological role, allows the formation of correctly charged Gln-tRNA(Gln) through the transamidation of misacylated Glu-tRNA(Gln) in organisms which lack glutaminyl-tRNA synthetase. The reaction takes place in the presence of glutamine and ATP through an activated gamma-phospho-Glu-tRNA(Gln). This chain is Glutamyl-tRNA(Gln) amidotransferase subunit A, found in Natronomonas pharaonis (strain ATCC 35678 / DSM 2160 / CIP 103997 / JCM 8858 / NBRC 14720 / NCIMB 2260 / Gabara) (Halobacterium pharaonis).